The primary structure comprises 149 residues: Protegrin-5 (149 aa).

The N-terminal stretch at 1 to 29 (METQRASLCLGRWSLWLLLLGLVVPSASA) is a signal peptide. The propeptide occupies 30 to 130 (QALSYREAVL…DITCNEVQGV (101 aa)). Residues 61 to 80 (DQPPKADEDPGTPKPVSFTV) are disordered. Disulfide bonds link C85-C96, C107-C124, C136-C145, and C138-C143. Residue R148 is modified to Arginine amide.

The protein belongs to the cathelicidin family.

Its subcellular location is the secreted. In terms of biological role, microbicidal activity. This Sus scrofa (Pig) protein is Protegrin-5 (NPG5).